A 79-amino-acid chain; its full sequence is Putative defensin-like protein 309 (79 aa).

A signal peptide spans 1 to 19; that stretch reads MKILAFFIFVLLIFSCSSS. Cystine bridges form between cysteine 31/cysteine 50, cysteine 37/cysteine 55, and cysteine 41/cysteine 57.

It belongs to the DEFL family.

It localises to the secreted. The polypeptide is Putative defensin-like protein 309 (Arabidopsis thaliana (Mouse-ear cress)).